The sequence spans 531 residues: ATP synthase subunit beta (531 aa).

The interval 1-48 (MVKAVTSSKETAKVEKKKSAPRSGVKKAVSKSQAGVKDSSSPVHKSSK) is disordered. Basic residues predominate over residues 19 to 29 (SAPRSGVKKAV). The span at 30–44 (SKSQAGVKDSSSPVH) shows a compositional bias: polar residues. 203–210 (GGAGVGKT) serves as a coordination point for ATP.

Belongs to the ATPase alpha/beta chains family. F-type ATPases have 2 components, CF(1) - the catalytic core - and CF(0) - the membrane proton channel. CF(1) has five subunits: alpha(3), beta(3), gamma(1), delta(1), epsilon(1). CF(0) has three main subunits: a(1), b(2) and c(9-12). The alpha and beta chains form an alternating ring which encloses part of the gamma chain. CF(1) is attached to CF(0) by a central stalk formed by the gamma and epsilon chains, while a peripheral stalk is formed by the delta and b chains.

The protein resides in the cell inner membrane. The catalysed reaction is ATP + H2O + 4 H(+)(in) = ADP + phosphate + 5 H(+)(out). Functionally, produces ATP from ADP in the presence of a proton gradient across the membrane. The catalytic sites are hosted primarily by the beta subunits. The sequence is that of ATP synthase subunit beta from Bartonella henselae (strain ATCC 49882 / DSM 28221 / CCUG 30454 / Houston 1) (Rochalimaea henselae).